Here is a 496-residue protein sequence, read N- to C-terminus: Cytochrome P450 3A30 (496 aa).

A heme-binding site is contributed by Cys-441.

Belongs to the cytochrome P450 family. Heme is required as a cofactor. Highly expressed in liver and intestine. Moderate expression in gill and spleen. Low expression in kidney, brain and heart.

The protein resides in the endoplasmic reticulum membrane. Its subcellular location is the microsome membrane. The catalysed reaction is an organic molecule + reduced [NADPH--hemoprotein reductase] + O2 = an alcohol + oxidized [NADPH--hemoprotein reductase] + H2O + H(+). Functionally, putative steroid 6-beta-hydroxylase. This Fundulus heteroclitus (Killifish) protein is Cytochrome P450 3A30 (cyp3a30).